Here is a 383-residue protein sequence, read N- to C-terminus: AP-1-like transcription factor YAP6 (383 aa).

Disordered stretches follow at residues M1–N64, D83–R113, and T168–R239. Residues N13–N64 show a composition bias toward polar residues. The segment covering H88–H101 has biased composition (low complexity). The segment covering T168–Q184 has biased composition (polar residues). Positions N185–P206 are enriched in low complexity. The segment covering Q213–L222 has biased composition (polar residues). The region spanning T221 to H284 is the bZIP domain. The interval R223–K247 is basic motif. The span at R227–A237 shows a compositional bias: low complexity. The leucine-zipper stretch occupies residues L249–N277.

Belongs to the bZIP family. YAP subfamily. In terms of assembly, homodimer.

It is found in the nucleus. Functionally, transcription activator involved in the regulation of genes expressed in response to environmental changes and metabolic requirements. According to genome-wide promoter binding and gene expression studies it regulates, among others, genes involved in ribosome biogenesis, protein synthesis, carbohydrate metabolism, and carbohydrate transport. It may also be involved in pleiotropic drug resistance. When overexpressed, it confers resistance to cisplatin, methylmethanosulfonate, and mitomycin C, and increases cellular tolerance to sodium and lithium. In Saccharomyces cerevisiae (strain ATCC 204508 / S288c) (Baker's yeast), this protein is AP-1-like transcription factor YAP6 (YAP6).